A 219-amino-acid chain; its full sequence is Ribosomal RNA small subunit methyltransferase G (219 aa).

S-adenosyl-L-methionine contacts are provided by residues Gly-78, Phe-83, 129-130 (GE), and Arg-146.

This sequence belongs to the methyltransferase superfamily. RNA methyltransferase RsmG family.

It is found in the cytoplasm. It catalyses the reaction guanosine(527) in 16S rRNA + S-adenosyl-L-methionine = N(7)-methylguanosine(527) in 16S rRNA + S-adenosyl-L-homocysteine. Its function is as follows. Specifically methylates the N7 position of guanine in position 527 of 16S rRNA. This chain is Ribosomal RNA small subunit methyltransferase G, found in Geotalea uraniireducens (strain Rf4) (Geobacter uraniireducens).